We begin with the raw amino-acid sequence, 80 residues long: Exodeoxyribonuclease 7 small subunit (80 aa).

It belongs to the XseB family. As to quaternary structure, heterooligomer composed of large and small subunits.

It localises to the cytoplasm. The enzyme catalyses Exonucleolytic cleavage in either 5'- to 3'- or 3'- to 5'-direction to yield nucleoside 5'-phosphates.. Functionally, bidirectionally degrades single-stranded DNA into large acid-insoluble oligonucleotides, which are then degraded further into small acid-soluble oligonucleotides. In Maridesulfovibrio salexigens (strain ATCC 14822 / DSM 2638 / NCIMB 8403 / VKM B-1763) (Desulfovibrio salexigens), this protein is Exodeoxyribonuclease 7 small subunit.